The primary structure comprises 145 residues: Large ribosomal subunit protein uL13 (145 aa).

Belongs to the universal ribosomal protein uL13 family. As to quaternary structure, part of the 50S ribosomal subunit.

Functionally, this protein is one of the early assembly proteins of the 50S ribosomal subunit, although it is not seen to bind rRNA by itself. It is important during the early stages of 50S assembly. This chain is Large ribosomal subunit protein uL13, found in Bacillus mycoides (strain KBAB4) (Bacillus weihenstephanensis).